The chain runs to 189 residues: Peptidyl-tRNA hydrolase (189 aa).

Y16 is a binding site for tRNA. H21 (proton acceptor) is an active-site residue. 3 residues coordinate tRNA: F67, N69, and N115.

It belongs to the PTH family. In terms of assembly, monomer.

It is found in the cytoplasm. It catalyses the reaction an N-acyl-L-alpha-aminoacyl-tRNA + H2O = an N-acyl-L-amino acid + a tRNA + H(+). Hydrolyzes ribosome-free peptidyl-tRNAs (with 1 or more amino acids incorporated), which drop off the ribosome during protein synthesis, or as a result of ribosome stalling. In terms of biological role, catalyzes the release of premature peptidyl moieties from peptidyl-tRNA molecules trapped in stalled 50S ribosomal subunits, and thus maintains levels of free tRNAs and 50S ribosomes. In Legionella pneumophila subsp. pneumophila (strain Philadelphia 1 / ATCC 33152 / DSM 7513), this protein is Peptidyl-tRNA hydrolase.